The chain runs to 1209 residues: Zinc finger protein 804A (1209 aa).

A C2H2-type zinc finger spans residues 57–81 (FYCELCDKQYYKHQEFDNHINSYDH). Positions 380–394 (VKHNEASTTEVENKN) are enriched in basic and acidic residues. 2 disordered regions span residues 380–401 (VKHN…TLAP) and 792–860 (PEEF…MKPQ). A compositionally biased stretch (basic residues) spans 807–819 (KPKKKRRRKRGRF). 2 stretches are compositionally biased toward basic and acidic residues: residues 826-836 (LELKENTDYPV) and 848-860 (LISE…MKPQ).

This is Zinc finger protein 804A (ZNF804A) from Homo sapiens (Human).